The sequence spans 237 residues: Putative ATP-binding protein BMEII0108 (237 aa).

The ABC transporter domain occupies 5 to 205; sequence ISFNNVVMRY…DLPYPRTEAI (201 aa). 37-44 serves as a coordination point for ATP; sequence GPSGCGKS.

The protein belongs to the ABC transporter superfamily. In terms of assembly, the complex is composed of two ATP-binding proteins (BMEII0108), two transmembrane proteins (BMEII0107) and a solute-binding protein (BMEII0109).

It localises to the cell inner membrane. Functionally, probably part of an ABC transporter complex. Probably Responsible for energy coupling to the transport system. The polypeptide is Putative ATP-binding protein BMEII0108 (Brucella melitensis biotype 1 (strain ATCC 23456 / CCUG 17765 / NCTC 10094 / 16M)).